The primary structure comprises 217 residues: MRPALFLCPVLISVLFLLSSLSLISGCNKALCASDVSKCLLQGLCQCRPQEGNCSCCKECMLCLSSLWEECCDCVGMCNPRSYNDSPATSKSTVEELYRPIPSLFRALTEGDAPINMMVVSFPVAEELSHHENLVSFLETLDSQSQNISLPTSSAQDDALCTVVYFDDCVSIRQCKQYCESMGGSKYRWFHNACCECIGPECLDYGSKTVKCMNCLI.

The signal sequence occupies residues 1-26; the sequence is MRPALFLCPVLISVLFLLSSLSLISG. N-linked (GlcNAc...) asparagine glycosylation is found at Asn-53 and Asn-147.

The protein belongs to the twisted gastrulation protein family.

It is found in the secreted. Its function is as follows. Involved in dorsal-ventral patterning. Appears to function predominantly as a ventralizing factor, through its actions as a BMP signaling agonist, acting through both chd-dependent and chd-independent mechanisms. May also antagonize BMP signaling, probably via formation of ternary complexes with chd and BMPs, resulting in dorsalization. This is Twisted gastrulation protein homolog 1-A (twsg1a) from Danio rerio (Zebrafish).